Reading from the N-terminus, the 103-residue chain is Ig kappa-b4 chain C region (103 aa).

The Ig-like domain maps to 5–95 (PTVLIFPPAA…KVTQGTTSVV (91 aa)). A disulfide bridge links cysteine 26 with cysteine 85.

The polypeptide is Ig kappa-b4 chain C region (Oryctolagus cuniculus (Rabbit)).